Consider the following 373-residue polypeptide: DNA replication and repair protein RecF (373 aa).

An ATP-binding site is contributed by Gly-30–Thr-37.

This sequence belongs to the RecF family.

It localises to the cytoplasm. The RecF protein is involved in DNA metabolism; it is required for DNA replication and normal SOS inducibility. RecF binds preferentially to single-stranded, linear DNA. It also seems to bind ATP. This is DNA replication and repair protein RecF from Marinobacter nauticus (strain ATCC 700491 / DSM 11845 / VT8) (Marinobacter aquaeolei).